The chain runs to 872 residues: Alanine--tRNA ligase (872 aa).

Zn(2+)-binding residues include His-566, His-570, Cys-668, and His-672.

It belongs to the class-II aminoacyl-tRNA synthetase family. Zn(2+) serves as cofactor.

It localises to the cytoplasm. The catalysed reaction is tRNA(Ala) + L-alanine + ATP = L-alanyl-tRNA(Ala) + AMP + diphosphate. In terms of biological role, catalyzes the attachment of alanine to tRNA(Ala) in a two-step reaction: alanine is first activated by ATP to form Ala-AMP and then transferred to the acceptor end of tRNA(Ala). Also edits incorrectly charged Ser-tRNA(Ala) and Gly-tRNA(Ala) via its editing domain. This chain is Alanine--tRNA ligase, found in Lactococcus lactis subsp. cremoris (strain SK11).